The chain runs to 1039 residues: Serine/threonine-protein kinase Tao (1039 aa).

The Protein kinase domain occupies 27 to 280 (FEDLREIGHG…SAKLLTHAYV (254 aa)). ATP contacts are provided by residues 33–41 (IGHGSFGAV) and lysine 56. Aspartate 150 functions as the Proton acceptor in the catalytic mechanism. Disordered regions lie at residues 324-457 (SAVG…NSAS), 485-508 (GGGG…LADR), 629-648 (HQQD…KKLH), and 677-707 (WKRE…KQHE). Residues 341–350 (SSKSNSITSE) show a composition bias toward polar residues. Positions 359 to 376 (SAASSQSSSSNSIPAAAQ) are enriched in low complexity. Over residues 377–387 (NHHHIAAHHHQ) the composition is skewed to basic residues. Low complexity-rich tracts occupy residues 388–397 (QAASAAVAAA) and 413–429 (PSGQ…VSRN). Residues 444-454 (HSMNNNVTPTN) show a composition bias toward polar residues. Positions 485 to 500 (GGGGTGTGGSGGGSPA) are enriched in gly residues. Coiled coils occupy residues 631-765 (QDVE…MLLK) and 835-993 (KQFR…DNES). Over residues 677 to 693 (WKRELSMDESTPKRQRD) the composition is skewed to basic and acidic residues.

It belongs to the protein kinase superfamily. STE Ser/Thr protein kinase family. STE20 subfamily. In terms of assembly, interacts with Schip1; the interaction enhances Tao kinase activity. The cofactor is Mg(2+). Autophosphorylated. In the posterior midgut, expressed in almost all intestinal cell types including intestinal stem cells and enterocytes (at protein level). Maternally expressed, ubiquitously distributed in the egg and early embryo and enriched in the germ plasm at the posterior pole of the early embryo including the pole cells.

It is found in the cytoplasm. The protein resides in the cytoskeleton. It localises to the spindle. Its subcellular location is the membrane. The protein localises to the perikaryon. It is found in the cell cortex. The protein resides in the cell projection. It localises to the axon. The enzyme catalyses L-seryl-[protein] + ATP = O-phospho-L-seryl-[protein] + ADP + H(+). It catalyses the reaction L-threonyl-[protein] + ATP = O-phospho-L-threonyl-[protein] + ADP + H(+). Functionally, serine/threonine-protein kinase which regulates the Hippo/SWH (Sav/Wts/Hpo) signaling pathway, a signaling pathway that plays a pivotal role in organ size control and tumor suppression by restricting proliferation and promoting apoptosis. The core of this pathway is composed of a kinase cascade wherein Hippo (hpo), in complex with its regulatory protein Salvador (sav), phosphorylates and activates Warts (wts) in complex with its regulatory protein Mats, which in turn phosphorylates and inactivates the Yorkie (yki) oncoprotein. In imaginal cells, phosphorylates and activates hpo and leads to repression of yki. In the midgut, negatively regulates the proliferation of intestinal stem cells through the Hippo/SWH pathway. Independent of the hippo/SWH pathway, regulates epithelial morphogenesis in follicle cells by promoting the endocytosis of Fas2 and reducing lateral adhesion between epithelial cells which, in turn, permits shrinking of the lateral membrane and initiates morphogenesis of the squamous epithelium. Required for the development of both the mushroom body and the ellipsoid body in the brain and may act as a negative regulator of the par-1 kinase. Negatively regulates the JNK pathway which increases sensitivity to ethanol exposure. Plays a role in the control of cell shape by negatively regulating the growth of microtubule plus-ends as they contact the actin-rich cell cortex. Required for the induction of apoptosis in pole cells by promoting expression of skl which enhances activity of the apoptosis activator hid. Its function is as follows. Induces in vitro expression of large, highly dynamic, microtubule-dependent lamellopodia-like cytoplasmic expansions which constantly probe the environment. In terms of biological role, induces in vitro expression of actin-dependent filopodia-like cytoplasmic protrusions which firmly attach to the substrate. Antagonizes the activity of isoform D. The protein is Serine/threonine-protein kinase Tao of Drosophila melanogaster (Fruit fly).